The following is a 506-amino-acid chain: Carboxyl-terminal PDZ ligand of neuronal nitric oxide synthase protein (506 aa).

The 171-residue stretch at F26–G196 folds into the PID domain. Disordered regions lie at residues H175 to P224 and D241 to E260. Phosphoserine occurs at positions 188, 192, and 195. Residues T203 to A213 show a composition bias toward low complexity. Position 266 is a phosphoserine (S266). Residues A322–L363 adopt a coiled-coil conformation. A phosphoserine mark is found at S371, S374, S401, and S417. An interaction with NOS1 region spans residues Q494 to V506. The PDZ-binding motif lies at I504–V506.

Interacts with the PDZ domain of NOS1 or the second PDZ domain of DLG4 through its C-terminus. Interacts with RASD1 and SYN1, SYN2 and SYN3 via its PID domain. Forms a ternary complex with NOS1 and RASD1. Forms a ternary complex with NOS1 and SYN1. Expressed in kidney glomeruli podocytes.

Its subcellular location is the cell projection. It localises to the filopodium. The protein resides in the podosome. In terms of biological role, adapter protein involved in neuronal nitric-oxide (NO) synthesis regulation via its association with nNOS/NOS1. The complex formed with NOS1 and synapsins is necessary for specific NO and synapsin functions at a presynaptic level. Mediates an indirect interaction between NOS1 and RASD1 leading to enhance the ability of NOS1 to activate RASD1. Competes with DLG4 for interaction with NOS1, possibly affecting NOS1 activity by regulating the interaction between NOS1 and DLG4. In kidney podocytes, plays a role in podosomes and filopodia formation through CDC42 activation. The protein is Carboxyl-terminal PDZ ligand of neuronal nitric oxide synthase protein of Homo sapiens (Human).